The primary structure comprises 289 residues: Melatonin receptor type 1B (289 aa).

Topologically, residues 1–2 are cytoplasmic; sequence GN. Residues 3 to 23 form a helical membrane-spanning segment; the sequence is AFVVSLALADLVVALYPYPLV. The Extracellular segment spans residues 24 to 41; sequence LLAIFHNGWTLGEMHCKV. A disulfide bond links C39 and C116. The helical transmembrane segment at 42-62 threads the bilayer; that stretch reads SGFVMGLSVIGSIFNITAIAI. Residues 63–81 are Cytoplasmic-facing; that stretch reads NRYCYICHSFAYDKVYSCW. Residues 82-102 traverse the membrane as a helical segment; it reads NTMLYVSLIWVLTVIATVPNF. Topologically, residues 103-126 are extracellular; it reads FVGSLKYDPRIYSCTFVQTASSYY. A helical transmembrane segment spans residues 127–147; that stretch reads TIAVVVIHFIVPITVVSFCYL. The Cytoplasmic portion of the chain corresponds to 148-179; that stretch reads RIWVLVLQVRRRVKSETKPRLKPSDFRNFLTM. Residues 180-200 traverse the membrane as a helical segment; it reads FVVFVIFAFCWAPLNFIGLAV. Residues 201 to 213 lie on the Extracellular side of the membrane; that stretch reads AINPSEMAPKVPE. The helical transmembrane segment at 214–234 threads the bilayer; sequence WLFIISYFMAYFNSCLNAIIY. The Cytoplasmic portion of the chain corresponds to 235–289; sequence GLLNQNFRNEYKRILMSLWMPRLFFQDTSKGGTDGQKSKPSPALNNNDQMKTDTL. The segment at 264-289 is disordered; that stretch reads KGGTDGQKSKPSPALNNNDQMKTDTL.

Belongs to the G-protein coupled receptor 1 family. As to expression, brain and kidney, with trace levels in lungs.

The protein localises to the cell membrane. In terms of biological role, high affinity receptor for melatonin. The activity of this receptor is mediated by pertussis toxin sensitive G proteins that inhibits adenylate cyclase activity. The chain is Melatonin receptor type 1B from Gallus gallus (Chicken).